A 396-amino-acid polypeptide reads, in one-letter code: Tryptophan synthase beta chain (396 aa).

The residue at position 86 (Lys86) is an N6-(pyridoxal phosphate)lysine.

It belongs to the TrpB family. As to quaternary structure, tetramer of two alpha and two beta chains. It depends on pyridoxal 5'-phosphate as a cofactor.

The enzyme catalyses (1S,2R)-1-C-(indol-3-yl)glycerol 3-phosphate + L-serine = D-glyceraldehyde 3-phosphate + L-tryptophan + H2O. Its pathway is amino-acid biosynthesis; L-tryptophan biosynthesis; L-tryptophan from chorismate: step 5/5. Its function is as follows. The beta subunit is responsible for the synthesis of L-tryptophan from indole and L-serine. In Vibrio vulnificus (strain CMCP6), this protein is Tryptophan synthase beta chain.